A 396-amino-acid chain; its full sequence is L-lactate dehydrogenase (396 aa).

The FMN hydroxy acid dehydrogenase domain maps to 1-380; that stretch reads MIISAASDYR…SGDSLVQELG (380 aa). Y24 contributes to the substrate binding site. Residues S106 and Q127 each coordinate FMN. Y129 contributes to the substrate binding site. T155 provides a ligand contact to FMN. R164 lines the substrate pocket. Position 251 (K251) interacts with FMN. The active-site Proton acceptor is the H275. R278 lines the substrate pocket. Position 306–330 (306–330) interacts with FMN; that stretch reads DSGIRNGLDVVRMIALGADTVLLGR.

This sequence belongs to the FMN-dependent alpha-hydroxy acid dehydrogenase family. It depends on FMN as a cofactor.

Its subcellular location is the cell inner membrane. The catalysed reaction is (S)-lactate + A = pyruvate + AH2. Catalyzes the conversion of L-lactate to pyruvate. Is coupled to the respiratory chain. In Salmonella typhimurium (strain LT2 / SGSC1412 / ATCC 700720), this protein is L-lactate dehydrogenase.